Reading from the N-terminus, the 431-residue chain is MELELLFQNVVNSSAFYNNQVAVAVSGGVDSIVLLHLMTNWAKKNKLSLPIALTVNHGLRPESQKEADFVVSYAKELGAKESFILNWEKQNIKGNIQLQARKARYKLLAEWCKNNNVKYLLVAHHKDDQAETFLLRLERGSGVDGLSSMDYKSFLNGIDIFRPLLNFSRSEIEKYAKLHRLKWIEDRSNHDLKYRRTLYRNLLKASDNQEILTERICLTALHMKRAAKALMHYTRLAFNDCVNVHDLGYIEIKLSEFYQLPEEIALRLLLYSIMAIASKHYKPRYSSLIAIFNRILQKDSNVNCTLSGCKIRKYGENILIIRESSRIQEITVNLPLNEPTQWDNRFSCTILGNQGCSVIIAPLKKTQKVPEFLKDYNCCPEVFYSLPTVQKDSKVLAYPDVNYNGKNTNDDKVQCIINSTIKQNLVSLISI.

26–31 (SGGVDS) provides a ligand contact to ATP.

This sequence belongs to the tRNA(Ile)-lysidine synthase family.

The protein localises to the cytoplasm. It catalyses the reaction cytidine(34) in tRNA(Ile2) + L-lysine + ATP = lysidine(34) in tRNA(Ile2) + AMP + diphosphate + H(+). In terms of biological role, ligates lysine onto the cytidine present at position 34 of the AUA codon-specific tRNA(Ile) that contains the anticodon CAU, in an ATP-dependent manner. Cytidine is converted to lysidine, thus changing the amino acid specificity of the tRNA from methionine to isoleucine. The protein is tRNA(Ile)-lysidine synthase of Wolbachia pipientis wMel.